The sequence spans 140 residues: 3-hydroxyacyl-[acyl-carrier-protein] dehydratase FabZ (140 aa).

Histidine 48 is an active-site residue.

It belongs to the thioester dehydratase family. FabZ subfamily.

It localises to the cytoplasm. It carries out the reaction a (3R)-hydroxyacyl-[ACP] = a (2E)-enoyl-[ACP] + H2O. Functionally, involved in unsaturated fatty acids biosynthesis. Catalyzes the dehydration of short chain beta-hydroxyacyl-ACPs and long chain saturated and unsaturated beta-hydroxyacyl-ACPs. This is 3-hydroxyacyl-[acyl-carrier-protein] dehydratase FabZ from Latilactobacillus sakei subsp. sakei (strain 23K) (Lactobacillus sakei subsp. sakei).